We begin with the raw amino-acid sequence, 319 residues long: ATP-dependent 6-phosphofructokinase (319 aa).

Glycine 11 lines the ATP pocket. Residue 21–25 (RAVVR) coordinates ADP. Residues 72–73 (RS) and 102–105 (GDGS) contribute to the ATP site. Position 103 (aspartate 103) interacts with Mg(2+). 125-127 (TID) lines the substrate pocket. Catalysis depends on aspartate 127, which acts as the Proton acceptor. Residue arginine 154 coordinates ADP. Substrate is bound by residues arginine 162 and 169–171 (MGR). ADP is bound by residues 185 to 187 (GAE), arginine 211, and 213 to 215 (KKH). Substrate contacts are provided by residues glutamate 222, arginine 243, and 249–252 (HVQR).

It belongs to the phosphofructokinase type A (PFKA) family. ATP-dependent PFK group I subfamily. Prokaryotic clade 'B1' sub-subfamily. Homotetramer. Mg(2+) is required as a cofactor.

Its subcellular location is the cytoplasm. It catalyses the reaction beta-D-fructose 6-phosphate + ATP = beta-D-fructose 1,6-bisphosphate + ADP + H(+). The protein operates within carbohydrate degradation; glycolysis; D-glyceraldehyde 3-phosphate and glycerone phosphate from D-glucose: step 3/4. Allosterically activated by ADP and other diphosphonucleosides, and allosterically inhibited by phosphoenolpyruvate. In terms of biological role, catalyzes the phosphorylation of D-fructose 6-phosphate to fructose 1,6-bisphosphate by ATP, the first committing step of glycolysis. The polypeptide is ATP-dependent 6-phosphofructokinase (Natranaerobius thermophilus (strain ATCC BAA-1301 / DSM 18059 / JW/NM-WN-LF)).